The following is a 79-amino-acid chain: Tungsten-containing formylmethanofuran dehydrogenase 2 subunit G (79 aa).

2 4Fe-4S ferredoxin-type domains span residues Val-2–Val-31 and Thr-51–Thr-79. Residues Cys-11, Cys-14, Cys-17, Cys-21, Cys-60, Cys-63, Cys-66, and Cys-70 each contribute to the [4Fe-4S] cluster site.

[4Fe-4S] cluster is required as a cofactor.

It carries out the reaction N-formylmethanofuran + 2 oxidized [2Fe-2S]-[ferredoxin] + H2O = methanofuran + 2 reduced [2Fe-2S]-[ferredoxin] + CO2 + H(+). The protein operates within one-carbon metabolism; methanogenesis from CO(2); 5,10-methenyl-5,6,7,8-tetrahydromethanopterin from CO(2): step 1/3. Its activity is regulated as follows. Not inactivated by cyanide. In terms of biological role, catalyzes the reversible oxidation of CO(2) and methanofuran (MFR) to N-formylmethanofuran (CHO-MFR). This enzyme is oxygen-labile. May function as an electron transfer protein. In Methanopyrus kandleri (strain AV19 / DSM 6324 / JCM 9639 / NBRC 100938), this protein is Tungsten-containing formylmethanofuran dehydrogenase 2 subunit G (fwdG).